Here is a 180-residue protein sequence, read N- to C-terminus: DNA replication regulator protein HobA (180 aa).

5 residues coordinate Ca(2+): glutamate 17, glutamate 27, glutamate 140, glutamate 143, and asparagine 176.

In terms of assembly, forms dimers and homotetramers. Interacts with domains I and II (residues 1-112) of DnaA. In a crystal with domains I and II of DnaA HobA forms tetramers with DnaA fragments bound at the dimer interface of the tetramer. It depends on Ca(2+) as a cofactor.

Its function is as follows. Required for DNA replication initiation. Increases binding of DnaA to oriC region. The polypeptide is DNA replication regulator protein HobA (Helicobacter pylori (strain ATCC 700392 / 26695) (Campylobacter pylori)).